The following is a 387-amino-acid chain: Cystathionine gamma-lyase (387 aa).

Substrate contacts are provided by Arg53, Tyr105, and Arg110. Lys202 is subject to N6-(pyridoxal phosphate)lysine. Residue Glu329 coordinates substrate.

The protein belongs to the trans-sulfuration enzymes family. Homotetramer. Interacts with CALM in a calcium-dependent manner. Requires pyridoxal 5'-phosphate as cofactor.

Its subcellular location is the cytoplasm. It carries out the reaction L,L-cystathionine + H2O = 2-oxobutanoate + L-cysteine + NH4(+). The catalysed reaction is L-cysteine + H2O = hydrogen sulfide + pyruvate + NH4(+) + H(+). The enzyme catalyses L-homocysteine + H2O = 2-oxobutanoate + hydrogen sulfide + NH4(+) + H(+). It catalyses the reaction L-homoserine = 2-oxobutanoate + NH4(+). It functions in the pathway amino-acid biosynthesis; L-cysteine biosynthesis; L-cysteine from L-homocysteine and L-serine: step 2/2. In terms of biological role, catalyzes the last step in the trans-sulfuration pathway from L-methionine to L-cysteine in a pyridoxal-5'-phosphate (PLP)-dependent manner, which consists on cleaving the L,L-cystathionine molecule into L-cysteine, ammonia and 2-oxobutanoate. Part of the L-cysteine derived from the trans-sulfuration pathway is utilized for biosynthesis of the ubiquitous antioxidant glutathione. Besides its role in the conversion of L-cystathionine into L-cysteine, it utilizes L-cysteine and L-homocysteine as substrates (at much lower rates than L,L-cystathionine) to produce the endogenous gaseous signaling molecule hydrogen sulfide (H2S). The protein is Cystathionine gamma-lyase (cysA) of Dictyostelium discoideum (Social amoeba).